We begin with the raw amino-acid sequence, 545 residues long: Chaperonin GroEL (545 aa).

ATP is bound by residues 29 to 32 (TLGP), 86 to 90 (DGTTT), Gly-413, 476 to 478 (NAA), and Asp-492.

It belongs to the chaperonin (HSP60) family. As to quaternary structure, forms a cylinder of 14 subunits composed of two heptameric rings stacked back-to-back. Interacts with the co-chaperonin GroES.

It is found in the cytoplasm. It catalyses the reaction ATP + H2O + a folded polypeptide = ADP + phosphate + an unfolded polypeptide.. In terms of biological role, together with its co-chaperonin GroES, plays an essential role in assisting protein folding. The GroEL-GroES system forms a nano-cage that allows encapsulation of the non-native substrate proteins and provides a physical environment optimized to promote and accelerate protein folding. The chain is Chaperonin GroEL from Oceanobacillus iheyensis (strain DSM 14371 / CIP 107618 / JCM 11309 / KCTC 3954 / HTE831).